A 99-amino-acid chain; its full sequence is Large ribosomal subunit protein uL23 (99 aa).

This sequence belongs to the universal ribosomal protein uL23 family. In terms of assembly, part of the 50S ribosomal subunit. Contacts protein L29, and trigger factor when it is bound to the ribosome.

Its function is as follows. One of the early assembly proteins it binds 23S rRNA. One of the proteins that surrounds the polypeptide exit tunnel on the outside of the ribosome. Forms the main docking site for trigger factor binding to the ribosome. In Magnetococcus marinus (strain ATCC BAA-1437 / JCM 17883 / MC-1), this protein is Large ribosomal subunit protein uL23.